A 321-amino-acid chain; its full sequence is Lipoyl synthase (321 aa).

Cysteine 68, cysteine 73, cysteine 79, cysteine 94, cysteine 98, cysteine 101, and serine 308 together coordinate [4Fe-4S] cluster. Residues phenylalanine 80–threonine 297 enclose the Radical SAM core domain.

It belongs to the radical SAM superfamily. Lipoyl synthase family. [4Fe-4S] cluster serves as cofactor.

Its subcellular location is the cytoplasm. It catalyses the reaction [[Fe-S] cluster scaffold protein carrying a second [4Fe-4S](2+) cluster] + N(6)-octanoyl-L-lysyl-[protein] + 2 oxidized [2Fe-2S]-[ferredoxin] + 2 S-adenosyl-L-methionine + 4 H(+) = [[Fe-S] cluster scaffold protein] + N(6)-[(R)-dihydrolipoyl]-L-lysyl-[protein] + 4 Fe(3+) + 2 hydrogen sulfide + 2 5'-deoxyadenosine + 2 L-methionine + 2 reduced [2Fe-2S]-[ferredoxin]. The protein operates within protein modification; protein lipoylation via endogenous pathway; protein N(6)-(lipoyl)lysine from octanoyl-[acyl-carrier-protein]: step 2/2. Its function is as follows. Catalyzes the radical-mediated insertion of two sulfur atoms into the C-6 and C-8 positions of the octanoyl moiety bound to the lipoyl domains of lipoate-dependent enzymes, thereby converting the octanoylated domains into lipoylated derivatives. In Photorhabdus laumondii subsp. laumondii (strain DSM 15139 / CIP 105565 / TT01) (Photorhabdus luminescens subsp. laumondii), this protein is Lipoyl synthase.